We begin with the raw amino-acid sequence, 344 residues long: UDP-N-acetylglucosamine transporter UGNT1 (344 aa).

Positions 1 to 23 (MRNNPVLPVSDPPLAGENDSDGK) are disordered. A run of 9 helical transmembrane segments spans residues 41–61 (YAAL…KAAL), 66–86 (FPCV…FLYA), 92–112 (IISF…FVPV), 114–134 (TLFH…ASMA), 167–187 (YTRS…FAGA), 194–214 (FYGY…LATI), 226–246 (FGLM…WTFI), 264–284 (FMVV…CIFL), and 304–324 (FTVG…MNVI).

This sequence belongs to the TPT transporter family. UGnT (TC 2.A.7.15) subfamily. Expressed in roots, leaves, stems, flowers and siliques.

Its subcellular location is the golgi apparatus membrane. Its function is as follows. Mediates the transport of UDP-N-acetylglucosamine (UDP-GlcNAc) across the Golgi apparatus membrane. Delivers an essential substrate for the maturation of N-glycans and the GlcNAc-containing glycosyl inositol phosphorylceramide (GIPC) class of sphingolipids in the Golgi apparatus. The protein is UDP-N-acetylglucosamine transporter UGNT1 of Arabidopsis thaliana (Mouse-ear cress).